The primary structure comprises 193 residues: Heat shock protein beta-1 (193 aa).

2 positions are modified to phosphoserine: S15 and S80. The sHSP domain maps to 74–182 (RALSELSSGI…QSSEITIPVT (109 aa)).

This sequence belongs to the small heat shock protein (HSP20) family. In terms of assembly, homooligomer. Homodimer; becomes monomeric upon activation. Heterooligomer. In terms of tissue distribution, smooth, cardiac and skeletal muscle, hardly detectable in fibroblasts or focal contacts.

It is found in the cytoplasm. It localises to the nucleus. Its subcellular location is the cytoskeleton. The protein resides in the spindle. In terms of biological role, small heat shock protein which functions as a molecular chaperone probably maintaining denatured proteins in a folding-competent state. Plays a role in stress resistance and actin organization. The polypeptide is Heat shock protein beta-1 (HSPB1) (Gallus gallus (Chicken)).